The following is a 308-amino-acid chain: MNYGKENVAVYRTYATPLEGVRTIPESSFDGRDNVLFGLDVRVQVEGEEFLPSFSEGDNTKVVATDSMKNFILHHAGEYDGATLEGFLEFVGSGFLDTYSQMSAVEVSADEIRFDELPVPEDDGDGYEASDLVFRVSDNESGYGSISLTRDDGTPVITDQTSGVTGLELVKVEGSSFTGYVQDEYTTLPEREDRTLYISLDIFWSYDDPEDALGEDPERYVPSEQVRDIAHVVFDEVDSNSIQDLIYQIGLRVLERYPQLASVRFEANNRTWLSVRDDLDGDASVLREPPAPTGFQQFSMDRGDLDEQ.

Active-site charge relay system residues include lysine 5 and threonine 65. Residues threonine 65, aspartate 66, phenylalanine 177, arginine 194, isoleucine 242, glutamine 243, and asparagine 269 each coordinate urate. The interval 283-308 is disordered; the sequence is ASVLREPPAPTGFQQFSMDRGDLDEQ.

This sequence belongs to the uricase family.

It catalyses the reaction urate + O2 + H2O = 5-hydroxyisourate + H2O2. It participates in purine metabolism; urate degradation; (S)-allantoin from urate: step 1/3. In terms of biological role, catalyzes the oxidation of uric acid to 5-hydroxyisourate, which is further processed to form (S)-allantoin. The polypeptide is Uricase (Haloferax volcanii (strain ATCC 29605 / DSM 3757 / JCM 8879 / NBRC 14742 / NCIMB 2012 / VKM B-1768 / DS2) (Halobacterium volcanii)).